The chain runs to 581 residues: MKASQFFISTLKEAPADAEIVSHQLMMRAGLIKKLGAGIYNYMPMGLRVIRKVEAIVREEMNRAGAIEMSMPVIQPAELWQETGRFEAMGPELLRIKDRHGRDFVVQPTSEEVVTDVMRQDIRSYKQLPKNLYQIQTKFRDERRPRFGLMRGREFIMKDAYSFDRDQTAAKVSYQNMAEAYRRIFDRFGLTYRAVAADSGAIGGDLSEEFQVIAATGEDAIVYCPTSDYAANMEKAEALAPAGPRPEASQALAKTPTPGKATCADVAALLGIPLKTTVKSLVLATDLTNEAGEVVKTQVWLLLLRGDHDMNEIKVGKVPGLDASFRFASLAEIDDHFGCEPGYLGPLSLKKPVKLVVDREVAVMADWVCGANEADFHITGVNWSRDLPEPDLIADIRNVVAGDPSPDGKGLLAIERGIEVGHVFYLGTKYSRAMNATFLGENGKPQFLEMGCYGIGITRLPAAAIEQNHDERGIIWPDAIAPFTVVICPITPERFPDVKAAADKLYSELLGAGVDVILDDRGERPGAMFADWELIGVPHRVTIGDRGLKEGHIEYQHRRDTAASKVEAAAAFDFLKGKLAL.

The protein belongs to the class-II aminoacyl-tRNA synthetase family. ProS type 1 subfamily. In terms of assembly, homodimer.

The protein localises to the cytoplasm. The enzyme catalyses tRNA(Pro) + L-proline + ATP = L-prolyl-tRNA(Pro) + AMP + diphosphate. Its function is as follows. Catalyzes the attachment of proline to tRNA(Pro) in a two-step reaction: proline is first activated by ATP to form Pro-AMP and then transferred to the acceptor end of tRNA(Pro). As ProRS can inadvertently accommodate and process non-cognate amino acids such as alanine and cysteine, to avoid such errors it has two additional distinct editing activities against alanine. One activity is designated as 'pretransfer' editing and involves the tRNA(Pro)-independent hydrolysis of activated Ala-AMP. The other activity is designated 'posttransfer' editing and involves deacylation of mischarged Ala-tRNA(Pro). The misacylated Cys-tRNA(Pro) is not edited by ProRS. This chain is Proline--tRNA ligase, found in Polaromonas naphthalenivorans (strain CJ2).